Here is a 684-residue protein sequence, read N- to C-terminus: Signal peptide peptidase-like 2C (684 aa).

The signal sequence occupies residues Met1–Gly21. The Lumenal portion of the chain corresponds to Gly22–Asn186. The PA domain occupies Ser83–Ser163. Asn100 is a glycosylation site (N-linked (GlcNAc...) asparagine). The helical transmembrane segment at Met187–Leu207 threads the bilayer. The Cytoplasmic portion of the chain corresponds to Thr208–Pro253. A disordered region spans residues Arg216–Glu242. A compositionally biased stretch (low complexity) spans His227–Gly238. Residues Ala254 to Tyr274 traverse the membrane as a helical segment. Topologically, residues Asp275–His276 are lumenal. The chain crosses the membrane as a helical span at residues Phe277–Leu297. At Ser298–Ser319 the chain is on the cytoplasmic side. The helical transmembrane segment at Leu320 to Ala340 threads the bilayer. The Lumenal portion of the chain corresponds to Tyr341–Arg346. The helical transmembrane segment at Trp347–His365 threads the bilayer. The Cytoplasmic segment spans residues Arg366 to Ser376. The helical transmembrane segment at Ser377 to Thr397 threads the bilayer. Asp386 is a catalytic residue. At Lys398–Gln439 the chain is on the lumenal side. A helical transmembrane segment spans residues Pro440–Cys460. Asp448 is an active-site residue. Over Arg461–Tyr472 the chain is Cytoplasmic. Residues Phe473–Leu493 form a helical membrane-spanning segment. Over Met494 to Gln495 the chain is Lumenal. The helical transmembrane segment at Met496 to Ala516 threads the bilayer. The PAL motif lies at Pro499–Leu501. Residues Ala517 to Leu684 lie on the Cytoplasmic side of the membrane. The disordered stretch occupies residues Lys548–Leu614. The segment covering Glu582 to Thr592 has biased composition (polar residues). Over residues Pro594–Pro611 the composition is skewed to basic and acidic residues.

The protein belongs to the peptidase A22B family. As to quaternary structure, interacts (via active sites) with FREY; the interaction stabilizes FREY1 protein and inhibits SPPL2C proteolytic activity. Post-translationally, glycosylated. As to expression, highly expressed in testis where it is primarily localised in spermatids (at protein level).

Its subcellular location is the endoplasmic reticulum membrane. Sperm-specific intramembrane-cleaving aspartic protease (I-CLiP) that cleaves distinct tail-anchored proteins and SNARE proteins. In elongated spermatids, modulates intracellular Ca(2+) homeostasis by controlling PLN abundance through proteolytic cleavage. During spermatogenesis, processes SNARE proteins and impacts vesicular trafficking which supports compartmental reorganization in maturating spermatids and may play a role in formation of the acrosome. Functionally, in round spermatids, acts as a scaffold protein supporting FREY1 in IZUMO1 recruitment at the endoplasmic reticulum membrane and coordination of IZUMO1 complex assembly. Stabilizes FREY1 at the endoplasmic reticulum membrane through interaction. May recruit IZUMO1 interaction partners. The chain is Signal peptide peptidase-like 2C from Homo sapiens (Human).